Here is a 225-residue protein sequence, read N- to C-terminus: NAD(P)H-quinone oxidoreductase subunit K, chloroplastic (225 aa).

[4Fe-4S] cluster-binding residues include cysteine 43, cysteine 44, cysteine 108, and cysteine 139.

This sequence belongs to the complex I 20 kDa subunit family. NDH is composed of at least 16 different subunits, 5 of which are encoded in the nucleus. [4Fe-4S] cluster serves as cofactor.

It is found in the plastid. The protein resides in the chloroplast thylakoid membrane. The enzyme catalyses a plastoquinone + NADH + (n+1) H(+)(in) = a plastoquinol + NAD(+) + n H(+)(out). It catalyses the reaction a plastoquinone + NADPH + (n+1) H(+)(in) = a plastoquinol + NADP(+) + n H(+)(out). NDH shuttles electrons from NAD(P)H:plastoquinone, via FMN and iron-sulfur (Fe-S) centers, to quinones in the photosynthetic chain and possibly in a chloroplast respiratory chain. The immediate electron acceptor for the enzyme in this species is believed to be plastoquinone. Couples the redox reaction to proton translocation, and thus conserves the redox energy in a proton gradient. The sequence is that of NAD(P)H-quinone oxidoreductase subunit K, chloroplastic from Lobularia maritima (Sweet alyssum).